The following is a 346-amino-acid chain: N-acetyl-gamma-glutamyl-phosphate reductase (346 aa).

Residue Cys-149 is part of the active site.

This sequence belongs to the NAGSA dehydrogenase family. Type 1 subfamily.

It localises to the cytoplasm. The catalysed reaction is N-acetyl-L-glutamate 5-semialdehyde + phosphate + NADP(+) = N-acetyl-L-glutamyl 5-phosphate + NADPH + H(+). Its pathway is amino-acid biosynthesis; L-arginine biosynthesis; N(2)-acetyl-L-ornithine from L-glutamate: step 3/4. Functionally, catalyzes the NADPH-dependent reduction of N-acetyl-5-glutamyl phosphate to yield N-acetyl-L-glutamate 5-semialdehyde. The polypeptide is N-acetyl-gamma-glutamyl-phosphate reductase (Oceanobacillus iheyensis (strain DSM 14371 / CIP 107618 / JCM 11309 / KCTC 3954 / HTE831)).